A 393-amino-acid polypeptide reads, in one-letter code: Phosphoglycerate kinase (393 aa).

Substrate is bound by residues 22–24 (DFN), Arg-37, 60–63 (HLGR), Arg-119, and Arg-152. Residues Lys-202, Gly-293, Glu-324, and 350 to 353 (GGDS) each bind ATP.

The protein belongs to the phosphoglycerate kinase family. In terms of assembly, monomer.

The protein resides in the cytoplasm. The catalysed reaction is (2R)-3-phosphoglycerate + ATP = (2R)-3-phospho-glyceroyl phosphate + ADP. It functions in the pathway carbohydrate degradation; glycolysis; pyruvate from D-glyceraldehyde 3-phosphate: step 2/5. In Borreliella burgdorferi (strain ATCC 35210 / DSM 4680 / CIP 102532 / B31) (Borrelia burgdorferi), this protein is Phosphoglycerate kinase (pgk).